The chain runs to 233 residues: Putative N-acetylmannosamine-6-phosphate 2-epimerase (233 aa).

Belongs to the NanE family.

It carries out the reaction an N-acyl-D-glucosamine 6-phosphate = an N-acyl-D-mannosamine 6-phosphate. It participates in amino-sugar metabolism; N-acetylneuraminate degradation; D-fructose 6-phosphate from N-acetylneuraminate: step 3/5. In terms of biological role, converts N-acetylmannosamine-6-phosphate (ManNAc-6-P) to N-acetylglucosamine-6-phosphate (GlcNAc-6-P). This Yersinia pseudotuberculosis serotype O:3 (strain YPIII) protein is Putative N-acetylmannosamine-6-phosphate 2-epimerase.